A 152-amino-acid polypeptide reads, in one-letter code: Ribosome maturation factor RimP (152 aa).

This sequence belongs to the RimP family.

Its subcellular location is the cytoplasm. Functionally, required for maturation of 30S ribosomal subunits. The chain is Ribosome maturation factor RimP from Alkaliphilus metalliredigens (strain QYMF).